We begin with the raw amino-acid sequence, 260 residues long: Indole-3-glycerol phosphate synthase (260 aa).

This sequence belongs to the TrpC family.

The catalysed reaction is 1-(2-carboxyphenylamino)-1-deoxy-D-ribulose 5-phosphate + H(+) = (1S,2R)-1-C-(indol-3-yl)glycerol 3-phosphate + CO2 + H2O. It participates in amino-acid biosynthesis; L-tryptophan biosynthesis; L-tryptophan from chorismate: step 4/5. This chain is Indole-3-glycerol phosphate synthase, found in Neisseria gonorrhoeae (strain NCCP11945).